The sequence spans 731 residues: Inducible ornithine decarboxylase (731 aa).

Lys-356 bears the N6-(pyridoxal phosphate)lysine mark.

Belongs to the Orn/Lys/Arg decarboxylase class-I family. As to quaternary structure, dodecamer. The cofactor is pyridoxal 5'-phosphate.

The catalysed reaction is L-ornithine + H(+) = putrescine + CO2. The polypeptide is Inducible ornithine decarboxylase (odcI) (Lactobacillus sp. (strain 30a)).